The following is a 368-amino-acid chain: Cytochrome b (368 aa).

4 helical membrane-spanning segments follow: residues 33 to 53 (FGSLLGLCLITQILTGIFLAM), 77 to 99 (WLIRSIHANSASMFFICIYTHTG), 112 to 132 (TWMVGVTLLLITILTAFLGYV), and 178 to 198 (FYALHFLFPFLISALSLMHII). Residues His-83 and His-97 each contribute to the heme b site. Residues His-182 and His-196 each coordinate heme b. His-201 serves as a coordination point for a ubiquinone. 4 helical membrane passes run 224–244 (FSAKDLIGVILLWIMLGSVVL), 288–308 (LGGVLALIMSIAILYFLPMMN), 323–343 (IAFWLLVTNFIVLMWIGSKPV), and 345–365 (SPFEEIGQIMTVTYFSIYMIM).

It belongs to the cytochrome b family. In terms of assembly, the main subunits of complex b-c1 are: cytochrome b, cytochrome c1 and the Rieske protein. Requires heme b as cofactor.

The protein resides in the mitochondrion inner membrane. Functionally, component of the ubiquinol-cytochrome c reductase complex (complex III or cytochrome b-c1 complex) that is part of the mitochondrial respiratory chain. The b-c1 complex mediates electron transfer from ubiquinol to cytochrome c. Contributes to the generation of a proton gradient across the mitochondrial membrane that is then used for ATP synthesis. This chain is Cytochrome b (mt:Cyt-b), found in Bugula neritina (Brown bryozoan).